Here is a 122-residue protein sequence, read N- to C-terminus: Biogenesis of lysosome-related organelles complex 1 subunit CNL1 (122 aa).

A compositionally biased stretch (basic and acidic residues) spans 1 to 10 (MQDNSSHSRE). The disordered stretch occupies residues 1 to 21 (MQDNSSHSRESASAGDDPLGI). A coiled-coil region spans residues 63–95 (ENTIDKNIAKFKELLEKCDTLENHYEMLNQLAI).

It belongs to the BLOC1S4 family. As to quaternary structure, component of the biogenesis of lysosome-related organelles complex-1 (BLOC-1) composed of at least BLI1, BLS1, CNL1, KXD1, SNN1 and VAB2.

The protein localises to the cytoplasm. Its function is as follows. Component of the biogenesis of lysosome-related organelles complex-1 (BLOC-1), a complex that is involved in endosomal cargo sorting. This is Biogenesis of lysosome-related organelles complex 1 subunit CNL1 (CNL1) from Saccharomyces cerevisiae (strain ATCC 204508 / S288c) (Baker's yeast).